A 94-amino-acid chain; its full sequence is Scorpine-like-1 (94 aa).

The signal sequence occupies residues 1 to 18 (MNTKFTVLIFLGVIVVSY). Positions 54 to 94 (EYGCMMDISWNKDCQRHCQSTEQKDGICHGMKCKCGKPRSY) constitute a BetaSPN-type CS-alpha/beta domain. Intrachain disulfides connect Cys57/Cys81, Cys67/Cys86, and Cys71/Cys88.

It belongs to the long chain scorpion toxin family. Class 3 subfamily. As to expression, expressed by the venom gland.

It is found in the secreted. In terms of biological role, has antibacterial activity. The chain is Scorpine-like-1 from Urodacus yaschenkoi (Inland robust scorpion).